A 330-amino-acid polypeptide reads, in one-letter code: tRNA U34 carboxymethyltransferase (330 aa).

Residues K91, W105, K110, G130, 152 to 154 (DPS), 181 to 182 (IE), M196, Y200, and R315 contribute to the carboxy-S-adenosyl-L-methionine site.

This sequence belongs to the class I-like SAM-binding methyltransferase superfamily. CmoB family. As to quaternary structure, homotetramer.

The enzyme catalyses carboxy-S-adenosyl-L-methionine + 5-hydroxyuridine(34) in tRNA = 5-carboxymethoxyuridine(34) in tRNA + S-adenosyl-L-homocysteine + H(+). Its function is as follows. Catalyzes carboxymethyl transfer from carboxy-S-adenosyl-L-methionine (Cx-SAM) to 5-hydroxyuridine (ho5U) to form 5-carboxymethoxyuridine (cmo5U) at position 34 in tRNAs. This Shewanella oneidensis (strain ATCC 700550 / JCM 31522 / CIP 106686 / LMG 19005 / NCIMB 14063 / MR-1) protein is tRNA U34 carboxymethyltransferase.